Reading from the N-terminus, the 69-residue chain is DNA gyrase inhibitor YacG (69 aa).

Zn(2+) is bound by residues C14, C17, C33, and C37.

It belongs to the DNA gyrase inhibitor YacG family. Interacts with GyrB. The cofactor is Zn(2+).

Inhibits all the catalytic activities of DNA gyrase by preventing its interaction with DNA. Acts by binding directly to the C-terminal domain of GyrB, which probably disrupts DNA binding by the gyrase. The sequence is that of DNA gyrase inhibitor YacG from Aliivibrio salmonicida (strain LFI1238) (Vibrio salmonicida (strain LFI1238)).